The primary structure comprises 315 residues: Olfactory receptor 2V1 (315 aa).

The next 7 membrane-spanning stretches (helical) occupy residues 31-51 (TVMLVFTVALCGNVLLILLIY), 59-79 (PMYFFLSQLSLMDLMLVCNIV), 100-120 (IQIGFFVSLVGSEGLLLGLMA), 145-165 (IAGSSWAFGILDGIIQMVAAM), 196-216 (FDTLLFACCVFMLLLPFSIIV), 239-259 (LATCSSHLTAVSLFYGAAMFI), and 273-293 (KVVSIFYTVLTPMLNPLIYSL). An intrachain disulfide couples Cys-98 to Cys-180.

The protein belongs to the G-protein coupled receptor 1 family.

The protein localises to the cell membrane. Functionally, odorant receptor. Activated by (+) and (-)-limonene. In Mus musculus (Mouse), this protein is Olfactory receptor 2V1.